A 264-amino-acid polypeptide reads, in one-letter code: Teichoic acids export ATP-binding protein TagH (264 aa).

One can recognise an ABC transporter domain in the interval 24–243 (IKDALIPKNK…YEQFLKDFKK (220 aa)). Residue 57–64 (GINGSGKS) coordinates ATP.

The protein belongs to the ABC transporter superfamily. Teichoic acids exporter (TC 3.A.1.104.1) family. The complex is composed of two ATP-binding proteins (TagH) and two transmembrane proteins (TagG).

It is found in the cell membrane. It carries out the reaction ATP + H2O + teichoic acidSide 1 = ADP + phosphate + teichoic acidSide 2.. Functionally, part of the ABC transporter complex TagGH involved in teichoic acids export. Responsible for energy coupling to the transport system. This is Teichoic acids export ATP-binding protein TagH from Staphylococcus haemolyticus (strain JCSC1435).